The primary structure comprises 203 residues: Holliday junction branch migration complex subunit RuvA (203 aa).

A domain I region spans residues 1-63 (MIFSVRGEVL…EDSMTLYGFS (63 aa)). Residues 64-141 (DAENRDLFLA…GPVGASGLTV (78 aa)) are domain II. Residues 141–145 (VGTAA) are flexible linker. Positions 146 to 203 (DGNAVRGSVVEALVGLGFAAKQAEEATDQVLDGELGKDGAVATSSALRAALSLLGKTR) are domain III.

It belongs to the RuvA family. As to quaternary structure, homotetramer. Forms an RuvA(8)-RuvB(12)-Holliday junction (HJ) complex. HJ DNA is sandwiched between 2 RuvA tetramers; dsDNA enters through RuvA and exits via RuvB. An RuvB hexamer assembles on each DNA strand where it exits the tetramer. Each RuvB hexamer is contacted by two RuvA subunits (via domain III) on 2 adjacent RuvB subunits; this complex drives branch migration. In the full resolvosome a probable DNA-RuvA(4)-RuvB(12)-RuvC(2) complex forms which resolves the HJ.

It is found in the cytoplasm. Functionally, the RuvA-RuvB-RuvC complex processes Holliday junction (HJ) DNA during genetic recombination and DNA repair, while the RuvA-RuvB complex plays an important role in the rescue of blocked DNA replication forks via replication fork reversal (RFR). RuvA specifically binds to HJ cruciform DNA, conferring on it an open structure. The RuvB hexamer acts as an ATP-dependent pump, pulling dsDNA into and through the RuvAB complex. HJ branch migration allows RuvC to scan DNA until it finds its consensus sequence, where it cleaves and resolves the cruciform DNA. This Mycobacterium leprae (strain Br4923) protein is Holliday junction branch migration complex subunit RuvA.